Reading from the N-terminus, the 38-residue chain is Large ribosomal subunit protein bL36 (38 aa).

It belongs to the bacterial ribosomal protein bL36 family.

The sequence is that of Large ribosomal subunit protein bL36 from Pseudothermotoga lettingae (strain ATCC BAA-301 / DSM 14385 / NBRC 107922 / TMO) (Thermotoga lettingae).